Consider the following 191-residue polypeptide: Putative RNA-binding protein EEED8.4 (191 aa).

Residues 55 to 132 enclose the RRM domain; it reads KSVFIGNVDF…RPIVVTAKRT (78 aa). The interval 136–160 is disordered; that stretch reads GMGHGVRGSSRGTFGRGRGAARGAP.

This chain is Putative RNA-binding protein EEED8.4, found in Caenorhabditis elegans.